The chain runs to 88 residues: Phosphocarrier protein HPr (88 aa).

The region spanning 1–88 is the HPr domain; the sequence is MEQNSYVIID…DVLSKEGLTK (88 aa). H15 acts as the Pros-phosphohistidine intermediate in catalysis. A Phosphoserine; by HPrK/P modification is found at S46.

The protein localises to the cytoplasm. Phosphorylation on Ser-46 inhibits the phosphoryl transfer from enzyme I to HPr. In terms of biological role, general (non sugar-specific) component of the phosphoenolpyruvate-dependent sugar phosphotransferase system (sugar PTS). This major carbohydrate active-transport system catalyzes the phosphorylation of incoming sugar substrates concomitantly with their translocation across the cell membrane. The phosphoryl group from phosphoenolpyruvate (PEP) is transferred to the phosphoryl carrier protein HPr by enzyme I. Phospho-HPr then transfers it to the PTS EIIA domain. Its function is as follows. P-Ser-HPr interacts with the catabolite control protein A (CcpA), forming a complex that binds to DNA at the catabolite response elements cre, operator sites preceding a large number of catabolite-regulated genes. Thus, P-Ser-HPr is a corepressor in carbon catabolite repression (CCR), a mechanism that allows bacteria to coordinate and optimize the utilization of available carbon sources. P-Ser-HPr also plays a role in inducer exclusion, in which it probably interacts with several non-PTS permeases and inhibits their transport activity. The chain is Phosphocarrier protein HPr (ptsH) from Staphylococcus aureus (strain MSSA476).